The primary structure comprises 349 residues: Isopentenyl-diphosphate delta-isomerase (349 aa).

Residue R6–K7 coordinates substrate. FMN-binding positions include A62 to T64, S93, and N122. Position 152 (Q152) interacts with substrate. E153 provides a ligand contact to Mg(2+). Residues K184, T214, G258 to G259, and A280 to G281 each bind FMN.

It belongs to the IPP isomerase type 2 family. In terms of assembly, homooctamer. Dimer of tetramers. FMN is required as a cofactor. NADPH serves as cofactor. It depends on Mg(2+) as a cofactor.

Its subcellular location is the cytoplasm. It catalyses the reaction isopentenyl diphosphate = dimethylallyl diphosphate. Its function is as follows. Involved in the biosynthesis of isoprenoids. Catalyzes the 1,3-allylic rearrangement of the homoallylic substrate isopentenyl (IPP) to its allylic isomer, dimethylallyl diphosphate (DMAPP). The protein is Isopentenyl-diphosphate delta-isomerase of Bacillus cereus (strain AH820).